A 721-amino-acid chain; its full sequence is BRCA1-A complex subunit RAP80 (721 aa).

The segment at 1–65 is disordered; that stretch reads MPRRKKKGKE…GLQKTKIKQS (65 aa). Positions 1–101 are necessary for transcriptional repression; sequence MPRRKKKGKE…SEQEAREVNS (101 aa). Residue K20 forms a Glycyl lysine isopeptide (Lys-Gly) (interchain with G-Cter in SUMO2) linkage. S29 is subject to Phosphoserine. A Glycyl lysine isopeptide (Lys-Gly) (interchain with G-Cter in SUMO2) cross-link involves residue K31. Residues S44 and S46 each carry the phosphoserine modification. Residues 60–78 carry the LR motif motif; that stretch reads TKIKQSSRAKCLAKRKIAQ. Glycyl lysine isopeptide (Lys-Gly) (interchain with G-Cter in SUMO2) cross-links involve residues K75 and K90. Residues 80 to 99 form the UIM 1 domain; it reads TEEEQFALALKMSEQEAREV. The tract at residues 93–204 is disordered; the sequence is EQEAREVNSQ…SVSSGSWDQS (112 aa). The segment at 97–103 is UIM-linker; the sequence is REVNSQE. Positions 100-200 are necessary for interaction with NR6A1 N-terminus; sequence NSQEEEEEEL…EEPVSVSSGS (101 aa). Position 101 is a phosphoserine (S101). The UIM 2 domain maps to 105–124; that stretch reads EEEELLRKAIAESLNSCRPS. Over residues 117-130 the composition is skewed to polar residues; that stretch reads SLNSCRPSDASATR. S140 is modified (phosphoserine). A compositionally biased stretch (low complexity) spans 194–204; it reads VSVSSGSWDQS. S205 is modified (phosphoserine). K245 is covalently cross-linked (Glycyl lysine isopeptide (Lys-Gly) (interchain with G-Cter in SUMO2)). Residues 270 to 400 are AIR; it reads TGGTVNYFWG…EEEPTTSHGQ (131 aa). A disordered region spans residues 334–369; sequence NECGQGEQASEKNEGISEDMGDEDKEERQESRASVW. Acidic residues predominate over residues 349–358; sequence ISEDMGDEDK. Residues K382 and K387 each participate in a glycyl lysine isopeptide (Lys-Gly) (interchain with G-Cter in SUMO2) cross-link. The interval 391 to 418 is disordered; the sequence is EEEPTTSHGQSSQGLFVEETSEEGNSVP. The necessary for interaction with NR6A1 C-terminus stretch occupies residues 400-500; that stretch reads QSSQGLFVEE…EIHTSTFSSS (101 aa). S402 and S420 each carry phosphoserine. Residue K429 forms a Glycyl lysine isopeptide (Lys-Gly) (interchain with G-Cter in SUMO2) linkage. S467 carries the post-translational modification Phosphoserine. Residues 502-529 form a UBZ4-type zinc finger; that stretch reads QVSCPLCDQGFPPTKIERHAMYCNGLMG. The Zn(2+) site is built by C505, C508, H520, and C524. The interval 505 to 582 is zinc-finger-like region; it reads CPLCDQGFPP…REYQCHVESC (78 aa). Glycyl lysine isopeptide (Lys-Gly) (interchain with G-Cter in SUMO2) cross-links involve residues K544, K559, K562, and K607. At S627 the chain carries Phosphoserine. Glycyl lysine isopeptide (Lys-Gly) (interchain with G-Cter in SUMO2) cross-links involve residues K635 and K642. Phosphoserine occurs at positions 655 and 679. Residues K698 and K699 each participate in a glycyl lysine isopeptide (Lys-Gly) (interchain with G-Cter in SUMO2) cross-link.

It belongs to the RAP80 family. Component of the ARISC complex, at least composed of UIMC1/RAP80, ABRAXAS1, BRCC3/BRCC36, BABAM2 and BABAM1/NBA1. Component of the BRCA1-A complex, at least composed of the BRCA1, BARD1, UIMC1/RAP80, ABRAXAS1, BRCC3/BRCC36, BABAM2 and BABAM1/NBA1. In the BRCA1-A complex, interacts directly with ABRAXAS1. Interacts with UBE2I. Interacts with NR6A1. Interacts with ESR1. Interacts with TSP57. Interacts with TRAIP. In terms of processing, sumoylated. Post-translationally, phosphorylated upon DNA damage by ATM or ATR.

It localises to the nucleus. Its function is as follows. Ubiquitin-binding protein. Specifically recognizes and binds 'Lys-63'-linked ubiquitin. Plays a central role in the BRCA1-A complex by specifically binding 'Lys-63'-linked ubiquitinated histones H2A and H2AX at DNA lesions sites, leading to target the BRCA1-BARD1 heterodimer to sites of DNA damage at double-strand breaks (DSBs). The BRCA1-A complex also possesses deubiquitinase activity that specifically removes 'Lys-63'-linked ubiquitin on histones H2A and H2AX. Also weakly binds monoubiquitin but with much less affinity than 'Lys-63'-linked ubiquitin. May interact with monoubiquitinated histones H2A and H2B; the relevance of such results is however unclear in vivo. Does not bind Lys-48'-linked ubiquitin. May indirectly act as a transcriptional repressor by inhibiting the interaction of NR6A1 with the corepressor NCOR1. This chain is BRCA1-A complex subunit RAP80 (UIMC1), found in Sus scrofa (Pig).